Here is a 354-residue protein sequence, read N- to C-terminus: GTPase Obg (354 aa).

The 159-residue stretch at 1 to 159 (MKFLDQCKIY…LWVWLRLKLI (159 aa)) folds into the Obg domain. Residues 160-328 (ADVGLVGLPN…LLRAAFTQVR (169 aa)) enclose the OBG-type G domain. Residues 166 to 173 (GLPNAGKS), 191 to 195 (FTTLT), 213 to 216 (DIPG), 280 to 283 (NKVD), and 309 to 311 (SGV) contribute to the GTP site. 2 residues coordinate Mg(2+): Ser173 and Thr193. Positions 333–354 (ETPAEAAIDEAPEEETPGGWQP) are disordered. The segment covering 339–348 (AIDEAPEEET) has biased composition (acidic residues).

This sequence belongs to the TRAFAC class OBG-HflX-like GTPase superfamily. OBG GTPase family. In terms of assembly, monomer. Mg(2+) is required as a cofactor.

The protein resides in the cytoplasm. Functionally, an essential GTPase which binds GTP, GDP and possibly (p)ppGpp with moderate affinity, with high nucleotide exchange rates and a fairly low GTP hydrolysis rate. Plays a role in control of the cell cycle, stress response, ribosome biogenesis and in those bacteria that undergo differentiation, in morphogenesis control. The chain is GTPase Obg from Caulobacter sp. (strain K31).